The chain runs to 876 residues: MQEQYRPAAIEPAAQKKWDDARIFNVSEDASKPKYYCLSMFPYPSGKLHMGHVRNYTIGDVLSRFKRLNGFNVMQPMGWDAFGMPAENAAMKNNVAPAAWTYDNIEYMKTQLKSLGFAIDWARETATCKPEYYRWEQWLFTKLFEKGIVYRKNGTVNWDPVDQTVLANEQVIDGRGWRSGALIEKREIPMYYFKITDYAEELLNDLDKLEHWPEQVKTMQRNWIGKSRGMTVRFAVSDDSKQGLEGDYARFLQVYTTRPDTLMGATYVAVAAEHPLATAAAADKPELQAFIAECKAGSVAEADMATMEKKGVPTGRYVVNPLNGDKLEVWIANYVLWGYGDGAVMAVPAHDERDFEFATKYSLPKKQVIAVGDNAFDANQWQEWYGDKENGVLVNSGDLDGMNFQTAFDAIAAKLQSQGAGEPKTQYRLRDWGISRQRYWGCPIPIVHCEQCGDVPVPADQLPVVLPENVVPDGMGSPLAKMPEFYETACPCCGGAAKRETDTMDTFMESSWYFFRYMSPKFSDGMVSAEAAKYWGAVDQYIGGIEHAILHLLYARFFTKLMRDEGLVNVDEPFERLLTQGMVVCETYYRENDKGGKDWINPADVELTFDDKGRPVSAVLKADGLPVVISGTEKMSKSKNNGVDPQELINAYGADTARLFMMFAAPPEQSLEWSDSGVEGAHRFLRRLWRTVYEYLKQGGAVKAFAGNQDGLSKELKDLRHKLHSTIAKVSDDYGRRQQFNTAIAAVMELLNQYDKTDTGSEQGRAVAQEVLETAVRLLWPIVPHICETLWSELNGAKLWEAGWPAVDEAALVKSEIEVMVQVNGKLRGKITVAADASKADLEAAALATEGAVKFMEGKPAKKIIVVPGRLVNIVV.

The 'HIGH' region motif lies at 42–52 (PYPSGKLHMGH). Residues 634-638 (KMSKS) carry the 'KMSKS' region motif. ATP is bound at residue lysine 637.

The protein belongs to the class-I aminoacyl-tRNA synthetase family.

It is found in the cytoplasm. The enzyme catalyses tRNA(Leu) + L-leucine + ATP = L-leucyl-tRNA(Leu) + AMP + diphosphate. The chain is Leucine--tRNA ligase from Neisseria meningitidis serogroup C (strain 053442).